Here is a 238-residue protein sequence, read N- to C-terminus: Serine protease SplE (238 aa).

An N-terminal signal peptide occupies residues 1 to 36 (MNKNIIIKSIAALTILTSVTGVGTTVVEGIQQTAKA). Active-site charge relay system residues include H75, D113, and S191.

The protein belongs to the peptidase S1B family.

It is found in the secreted. The sequence is that of Serine protease SplE (splE) from Staphylococcus aureus (strain USA300).